A 477-amino-acid chain; its full sequence is Inner membrane transporter YgjI (477 aa).

At 1–8 (MSDTKRNT) the chain is on the periplasmic side. The chain crosses the membrane as a helical span at residues 9–29 (IGKFGLLSLTFAAVYSFNNVI). The Cytoplasmic segment spans residues 30–41 (NNNIELGLASAP). Residues 42–62 (MFFLATIFYFIPFCLIIAEFV) traverse the membrane as a helical segment. Over 63–83 (SLNKNSEAGVYAWVKSSLGGR) the chain is Periplasmic. A helical transmembrane segment spans residues 84–104 (WAFITAYTYWFVNLFFFTSLL). Residues 105–120 (PRVIAYASYAFLGYEY) are Cytoplasmic-facing. A helical transmembrane segment spans residues 121–141 (IMTPVATTIISMVLFAFSTWV). Topologically, residues 142 to 158 (STNGAKMLGPITSVTST) are periplasmic. The helical transmembrane segment at 159-179 (LMLLLTLSYILLAGTALVGGV) threads the bilayer. The Cytoplasmic segment spans residues 180 to 196 (QPADAITVDAMIPNFNW). Residues 197–217 (AFLGVTTWIFMAAGGAESVAV) traverse the membrane as a helical segment. The Periplasmic portion of the chain corresponds to 218 to 232 (YVNDVKGGSKSFVKV). Residues 233-253 (IILAGIFIGVLYSVSSVLINV) form a helical membrane-spanning segment. Residues 254-263 (FVSSKELKFT) are Cytoplasmic-facing. Residues 264 to 284 (GGSVQVFHGMAAYFGLPEALM) traverse the membrane as a helical segment. Residues 285-286 (NR) are Periplasmic-facing. Residues 287-307 (FVGLVSFTAMFGSLLMWTATP) traverse the membrane as a helical segment. Over 308–335 (VKIFFSEIPEGIFGKKTVELNENGVPAR) the chain is Cytoplasmic. A helical membrane pass occupies residues 336 to 356 (AAWIQFLIVIPLMIIPMLGSN). Topologically, residues 357–364 (TVQDLMNT) are periplasmic. A helical transmembrane segment spans residues 365 to 385 (IINMTAAASMLPPLFIMLAYL). Residues 386–405 (NLRAKLDHLPRDFRMGSRRT) are Cytoplasmic-facing. A helical transmembrane segment spans residues 406-426 (GIIVVSMLIAIFAVGFVASTF). The Periplasmic portion of the chain corresponds to 427–431 (PTGAN). The chain crosses the membrane as a helical span at residues 432–452 (ILTIIFYNVGGIVIFLGFAWW). Topologically, residues 453–477 (KYSKYIKGLTAEERHIEATPASNVD) are cytoplasmic.

The protein belongs to the amino acid-polyamine-organocation (APC) superfamily.

Its subcellular location is the cell inner membrane. This chain is Inner membrane transporter YgjI (ygjI), found in Escherichia coli (strain K12).